Reading from the N-terminus, the 913-residue chain is Glutamate receptor ionotropic, kainate 2 (913 aa).

At Met1–Pro566 the chain is on the extracellular side. Asn72, Asn78, Asn280, Asn383, Asn417, Asn428, and Asn435 each carry an N-linked (GlcNAc...) asparagine glycan. The cysteines at positions 101 and 352 are disulfide-linked. Pro521, Ala523, and Arg528 together coordinate L-glutamate. N-linked (GlcNAc...) asparagine glycosylation is present at Asn551. Residues Asp567–Ala587 traverse the membrane as a helical segment. The Cytoplasmic segment spans residues Arg588 to Gly643. Residues Ile644–Leu664 traverse the membrane as a helical segment. The Extracellular segment spans residues Thr665–Asn824. Residues Ala694, Thr695, and Glu743 each contribute to the L-glutamate site. A disulfide bridge connects residues Cys755 and Cys809. Asn756 carries an N-linked (GlcNAc...) asparagine glycan. The chain crosses the membrane as a helical span at residues Ile825–Gly845. Topologically, residues Glu846–Ala913 are cytoplasmic.

The protein belongs to the glutamate-gated ion channel (TC 1.A.10.1) family. GRIK2 subfamily. In terms of assembly, homotetramer and heterotetramer with GRIK5. Tetramers may be formed by the dimerization of dimers.

The protein localises to the cell membrane. The protein resides in the postsynaptic cell membrane. The enzyme catalyses Ca(2+)(in) = Ca(2+)(out). The catalysed reaction is Na(+)(in) = Na(+)(out). Cold receptor activity activated by temperatures between 10-19 degrees Celsius. Its function is as follows. Ionotropic glutamate receptor that functions as a cation-permeable ligand-gated ion channel, gated by L-glutamate and the glutamatergic agonist kainic acid. L-glutamate acts as an excitatory neurotransmitter at many synapses in the central nervous system. Binding of the excitatory neurotransmitter L-glutamate induces a conformation change, leading to the opening of the cation channel, and thereby converts the chemical signal to an electrical impulse. The receptor then desensitizes rapidly and enters a transient inactive state, characterized by the presence of bound agonist. Independent of its ionotropic glutamate receptor activity, acts as a thermoreceptor conferring sensitivity to cold temperatures. Functions in dorsal root ganglion neurons. In Xenopus laevis (African clawed frog), this protein is Glutamate receptor ionotropic, kainate 2 (grik2).